A 955-amino-acid chain; its full sequence is 2-oxoglutarate dehydrogenase E1 component (955 aa).

It belongs to the alpha-ketoglutarate dehydrogenase family. In terms of assembly, homodimer. Part of the 2-oxoglutarate dehydrogenase (OGDH) complex composed of E1 (2-oxoglutarate dehydrogenase), E2 (dihydrolipoamide succinyltransferase) and E3 (dihydrolipoamide dehydrogenase); the complex contains multiple copies of the three enzymatic components (E1, E2 and E3). It depends on thiamine diphosphate as a cofactor.

The catalysed reaction is N(6)-[(R)-lipoyl]-L-lysyl-[protein] + 2-oxoglutarate + H(+) = N(6)-[(R)-S(8)-succinyldihydrolipoyl]-L-lysyl-[protein] + CO2. Its function is as follows. E1 component of the 2-oxoglutarate dehydrogenase (OGDH) complex which catalyzes the decarboxylation of 2-oxoglutarate, the first step in the conversion of 2-oxoglutarate to succinyl-CoA and CO(2). In Bacillus cereus (strain AH820), this protein is 2-oxoglutarate dehydrogenase E1 component.